The chain runs to 648 residues: Biosynthetic arginine decarboxylase (648 aa).

The residue at position 109 (Lys109) is an N6-(pyridoxal phosphate)lysine. 291–301 provides a ligand contact to substrate; the sequence is IDVGGGLGIDF.

This sequence belongs to the Orn/Lys/Arg decarboxylase class-II family. SpeA subfamily. It depends on Mg(2+) as a cofactor. Requires pyridoxal 5'-phosphate as cofactor.

The catalysed reaction is L-arginine + H(+) = agmatine + CO2. Its pathway is amine and polyamine biosynthesis; agmatine biosynthesis; agmatine from L-arginine: step 1/1. In terms of biological role, catalyzes the biosynthesis of agmatine from arginine. The protein is Biosynthetic arginine decarboxylase of Prochlorococcus marinus (strain MIT 9215).